Reading from the N-terminus, the 352-residue chain is Guanine nucleotide-binding protein alpha-7 subunit (352 aa).

Glycine 2 carries the N-myristoyl glycine lipid modification. Cysteine 4 carries S-palmitoyl cysteine lipidation. Residues 32–352 (RIIKLLLLGA…AKNLKSMGLC (321 aa)) enclose the G-alpha domain. The tract at residues 35–48 (KLLLLGAGESGKST) is G1 motif. Residues 40–47 (GAGESGKS), 174–180 (LRTRIKT), 199–203 (DVGGQ), 268–271 (NKKD), and alanine 324 contribute to the GTP site. Mg(2+)-binding residues include serine 47 and threonine 180. The G2 motif stretch occupies residues 172-180 (DLLRTRIKT). The segment at 195 to 204 (FRVIDVGGQR) is G3 motif. The interval 264 to 271 (ILFLNKKD) is G4 motif. Residues 322-327 (TCATDT) form a G5 motif region.

Belongs to the G-alpha family. G(i/o/t/z) subfamily. As to quaternary structure, g proteins are composed of 3 units; alpha, beta and gamma. The alpha chain contains the guanine nucleotide binding site.

In terms of biological role, guanine nucleotide-binding proteins (G proteins) are involved as modulators or transducers in various transmembrane signaling systems. In Caenorhabditis briggsae, this protein is Guanine nucleotide-binding protein alpha-7 subunit (gpa-7).